Reading from the N-terminus, the 397-residue chain is Acetylornithine aminotransferase (397 aa).

Phe129 is a binding site for pyridoxal 5'-phosphate. Arg132 serves as a coordination point for N(2)-acetyl-L-ornithine. 214-217 contributes to the pyridoxal 5'-phosphate binding site; it reads DEVQ. N6-(pyridoxal phosphate)lysine is present on Lys243. Position 271 (Ser271) interacts with N(2)-acetyl-L-ornithine. Thr272 contributes to the pyridoxal 5'-phosphate binding site.

The protein belongs to the class-III pyridoxal-phosphate-dependent aminotransferase family. ArgD subfamily. In terms of assembly, homodimer. Requires pyridoxal 5'-phosphate as cofactor.

Its subcellular location is the cytoplasm. The enzyme catalyses N(2)-acetyl-L-ornithine + 2-oxoglutarate = N-acetyl-L-glutamate 5-semialdehyde + L-glutamate. It functions in the pathway amino-acid biosynthesis; L-arginine biosynthesis; N(2)-acetyl-L-ornithine from L-glutamate: step 4/4. The chain is Acetylornithine aminotransferase from Neisseria meningitidis serogroup A / serotype 4A (strain DSM 15465 / Z2491).